The sequence spans 116 residues: Large ribosomal subunit protein bL17 (116 aa).

The protein belongs to the bacterial ribosomal protein bL17 family. In terms of assembly, part of the 50S ribosomal subunit. Contacts protein L32.

The polypeptide is Large ribosomal subunit protein bL17 (Picosynechococcus sp. (strain ATCC 27264 / PCC 7002 / PR-6) (Agmenellum quadruplicatum)).